The following is a 448-amino-acid chain: tRNA-2-methylthio-N(6)-dimethylallyladenosine synthase (448 aa).

The 118-residue stretch at 2 to 119 (KKLYIKTFGC…LSDLIAQRRK (118 aa)) folds into the MTTase N-terminal domain. [4Fe-4S] cluster contacts are provided by cysteine 11, cysteine 48, cysteine 82, cysteine 156, cysteine 160, and cysteine 163. One can recognise a Radical SAM core domain in the interval 142 to 375 (RQTRGSAYVS…LALIEGQSNQ (234 aa)). One can recognise a TRAM domain in the interval 378 to 444 (QKMLGKTERV…NYTLRGELVE (67 aa)).

The protein belongs to the methylthiotransferase family. MiaB subfamily. Monomer. [4Fe-4S] cluster is required as a cofactor.

The protein localises to the cytoplasm. The catalysed reaction is N(6)-dimethylallyladenosine(37) in tRNA + (sulfur carrier)-SH + AH2 + 2 S-adenosyl-L-methionine = 2-methylsulfanyl-N(6)-dimethylallyladenosine(37) in tRNA + (sulfur carrier)-H + 5'-deoxyadenosine + L-methionine + A + S-adenosyl-L-homocysteine + 2 H(+). In terms of biological role, catalyzes the methylthiolation of N6-(dimethylallyl)adenosine (i(6)A), leading to the formation of 2-methylthio-N6-(dimethylallyl)adenosine (ms(2)i(6)A) at position 37 in tRNAs that read codons beginning with uridine. The chain is tRNA-2-methylthio-N(6)-dimethylallyladenosine synthase from Polynucleobacter asymbioticus (strain DSM 18221 / CIP 109841 / QLW-P1DMWA-1) (Polynucleobacter necessarius subsp. asymbioticus).